The sequence spans 492 residues: NADH-quinone oxidoreductase subunit N (492 aa).

Helical transmembrane passes span 13-33, 43-63, 82-102, 110-132, 136-155, 169-189, 210-230, 245-265, 272-292, 306-326, 331-351, 377-397, 410-430, and 457-477; these read MLPV…GFWL, ILFV…APWA, AALL…LVSL, VSFA…IAFS, IVML…LATL, FLLG…LYGA, IGIL…KIAL, PTLV…AGML, LAAG…TLVI, LLAY…LGDT, AALG…LAVV, AVAL…AGFF, GYLL…VYYL, and VAVA…NLWY.

Belongs to the complex I subunit 2 family. In terms of assembly, NDH-1 is composed of 15 different subunits. Subunits NuoA, H, J, K, L, M, N constitute the membrane sector of the complex.

Its subcellular location is the cell membrane. The catalysed reaction is a quinone + NADH + 5 H(+)(in) = a quinol + NAD(+) + 4 H(+)(out). Its function is as follows. NDH-1 shuttles electrons from NADH, via FMN and iron-sulfur (Fe-S) centers, to quinones in the respiratory chain. The immediate electron acceptor for the enzyme in this species is believed to be a menaquinone. Couples the redox reaction to proton translocation (for every two electrons transferred, four hydrogen ions are translocated across the cytoplasmic membrane), and thus conserves the redox energy in a proton gradient. This is NADH-quinone oxidoreductase subunit N from Deinococcus radiodurans (strain ATCC 13939 / DSM 20539 / JCM 16871 / CCUG 27074 / LMG 4051 / NBRC 15346 / NCIMB 9279 / VKM B-1422 / R1).